We begin with the raw amino-acid sequence, 298 residues long: Lysozyme-like protein 1 (298 aa).

Residues 1-16 (MLKLAFVTFLFALASA) form the signal peptide. A Ch-type lysozyme domain is found at 59–277 (YAYAVDISVP…AAASSKNTDF (219 aa)).

Belongs to the glycosyl hydrolase 25 family. As to expression, expressed in intestine, IL2 and IL6 neurons and some neurons in the head ganglia.

The protein localises to the cytoplasmic vesicle lumen. Involved in resistance to Gram-negative bacterium S.marcescens and to bacterium Gram-positive S.aureus infection. In Caenorhabditis elegans, this protein is Lysozyme-like protein 1.